Here is a 275-residue protein sequence, read N- to C-terminus: Phosphonoacetaldehyde hydrolase (275 aa).

The active-site Nucleophile is aspartate 15. Aspartate 15 and alanine 17 together coordinate Mg(2+). The active-site Schiff-base intermediate with substrate is the lysine 56. Aspartate 189 is a binding site for Mg(2+).

Belongs to the HAD-like hydrolase superfamily. PhnX family. As to quaternary structure, homodimer. Mg(2+) serves as cofactor.

The enzyme catalyses phosphonoacetaldehyde + H2O = acetaldehyde + phosphate + H(+). With respect to regulation, inhibited by phosphite, moderately inhibited by phosphonic acids, the corresponding aminophosphonic acids activate the enzyme. Its function is as follows. Involved in phosphonate degradation. This Pseudomonas aeruginosa (strain ATCC 15692 / DSM 22644 / CIP 104116 / JCM 14847 / LMG 12228 / 1C / PRS 101 / PAO1) protein is Phosphonoacetaldehyde hydrolase.